A 282-amino-acid polypeptide reads, in one-letter code: 4-diphosphocytidyl-2-C-methyl-D-erythritol kinase (282 aa).

Residue K11 is part of the active site. 93 to 103 provides a ligand contact to ATP; the sequence is LVSAGLAGGSA. The active site involves D133.

Belongs to the GHMP kinase family. IspE subfamily.

The enzyme catalyses 4-CDP-2-C-methyl-D-erythritol + ATP = 4-CDP-2-C-methyl-D-erythritol 2-phosphate + ADP + H(+). Its pathway is isoprenoid biosynthesis; isopentenyl diphosphate biosynthesis via DXP pathway; isopentenyl diphosphate from 1-deoxy-D-xylulose 5-phosphate: step 3/6. Functionally, catalyzes the phosphorylation of the position 2 hydroxy group of 4-diphosphocytidyl-2C-methyl-D-erythritol. This chain is 4-diphosphocytidyl-2-C-methyl-D-erythritol kinase, found in Ehrlichia chaffeensis (strain ATCC CRL-10679 / Arkansas).